A 432-amino-acid polypeptide reads, in one-letter code: Glutamate-1-semialdehyde 2,1-aminomutase (432 aa).

An N6-(pyridoxal phosphate)lysine modification is found at Lys-265.

The protein belongs to the class-III pyridoxal-phosphate-dependent aminotransferase family. HemL subfamily. As to quaternary structure, homodimer. Requires pyridoxal 5'-phosphate as cofactor.

It is found in the cytoplasm. The enzyme catalyses (S)-4-amino-5-oxopentanoate = 5-aminolevulinate. Its pathway is porphyrin-containing compound metabolism; protoporphyrin-IX biosynthesis; 5-aminolevulinate from L-glutamyl-tRNA(Glu): step 2/2. This Histophilus somni (strain 129Pt) (Haemophilus somnus) protein is Glutamate-1-semialdehyde 2,1-aminomutase.